We begin with the raw amino-acid sequence, 367 residues long: UDP-N-acetylglucosamine--N-acetylmuramyl-(pentapeptide) pyrophosphoryl-undecaprenol N-acetylglucosamine transferase (367 aa).

Residues Thr-15–Gly-17, Asn-127, Arg-163, Ser-191, Ile-249, and Gln-294 each bind UDP-N-acetyl-alpha-D-glucosamine.

Belongs to the glycosyltransferase 28 family. MurG subfamily.

The protein localises to the cell inner membrane. The enzyme catalyses di-trans,octa-cis-undecaprenyl diphospho-N-acetyl-alpha-D-muramoyl-L-alanyl-D-glutamyl-meso-2,6-diaminopimeloyl-D-alanyl-D-alanine + UDP-N-acetyl-alpha-D-glucosamine = di-trans,octa-cis-undecaprenyl diphospho-[N-acetyl-alpha-D-glucosaminyl-(1-&gt;4)]-N-acetyl-alpha-D-muramoyl-L-alanyl-D-glutamyl-meso-2,6-diaminopimeloyl-D-alanyl-D-alanine + UDP + H(+). It participates in cell wall biogenesis; peptidoglycan biosynthesis. Functionally, cell wall formation. Catalyzes the transfer of a GlcNAc subunit on undecaprenyl-pyrophosphoryl-MurNAc-pentapeptide (lipid intermediate I) to form undecaprenyl-pyrophosphoryl-MurNAc-(pentapeptide)GlcNAc (lipid intermediate II). The chain is UDP-N-acetylglucosamine--N-acetylmuramyl-(pentapeptide) pyrophosphoryl-undecaprenol N-acetylglucosamine transferase from Burkholderia cenocepacia (strain HI2424).